Reading from the N-terminus, the 708-residue chain is Glutamate--tRNA ligase, cytoplasmic (708 aa).

Interaction with ARC1 regions lie at residues 106 to 115 and 141 to 157; these read NLRTFILGGL and KVDVNVSRWYTLLEMDP. L-glutamate is bound at residue 205–207; that stretch reads RFP. Positions 210 to 219 match the 'HIGH' region motif; it reads PSGYLHIGHA. Position 215 (His-215) interacts with ATP. Asp-241 provides a ligand contact to L-glutamate. At Thr-300 the chain carries Phosphothreonine. L-glutamate-binding positions include 382 to 386 and Arg-400; that span reads YDFCV. Residues Glu-403 and 437-441 each bind ATP; that span reads LLSKR. The short motif at 437-441 is the 'KMSKS' region element; sequence LLSKR.

It belongs to the class-I aminoacyl-tRNA synthetase family. Glutamate--tRNA ligase type 2 subfamily. Component of a yeast aminoacyl-tRNA synthase (aaRS) complex formed by methionyl-tRNA synthase MES1, glutamyl-tRNA synthase GUS1 and the tRNA aminoacylation cofactor ARC1 in a stoichiometric complex. Interacts (via N-ter) with ARC1 (via N-ter). Can also form a stable binary complex with ARC1 that is functional in terms of aminoacylation. ARC1 increases the affinity for cognate tRNAs due to the presence of a tRNA binding domain in the middle and C-terminal part of ARC1.

The protein resides in the cytoplasm. It localises to the mitochondrion. The enzyme catalyses tRNA(Glu) + L-glutamate + ATP = L-glutamyl-tRNA(Glu) + AMP + diphosphate. Catalyzes the attachment of glutamate to tRNA(Glu) in a two-step reaction: glutamate is first activated by ATP to form Glu-AMP and then transferred to the acceptor end of tRNA(Glu). In mitochondria, constitutes the nondiscriminating glutamyl-tRNA synthase that generates the mitochondrial mischarged glutamyl-tRNA(Gln) substrate for the tRNA-dependent amidotransferase (AdT), which generates mitochondrial glutaminyl-tRNA(Gln) by transamidation of glutamyl-tRNA(Gln). The chain is Glutamate--tRNA ligase, cytoplasmic (GUS1) from Saccharomyces cerevisiae (strain ATCC 204508 / S288c) (Baker's yeast).